Here is a 184-residue protein sequence, read N- to C-terminus: Photosystem I assembly protein Ycf4 (184 aa).

2 consecutive transmembrane segments (helical) span residues Leu-19–Gly-39 and Phe-57–Ser-77.

Belongs to the Ycf4 family.

It localises to the plastid. The protein resides in the chloroplast thylakoid membrane. Seems to be required for the assembly of the photosystem I complex. The chain is Photosystem I assembly protein Ycf4 from Jasminum nudiflorum (Winter jasmine).